The primary structure comprises 278 residues: Undecaprenyl-diphosphatase (278 aa).

Transmembrane regions (helical) follow at residues 3-23 (YILI…IPIS), 42-62 (VAYS…IIYF), 88-108 (FLVI…LFVI), 112-132 (ILGL…IIIY), 152-172 (IIIV…RSGI), 190-210 (LSFI…VLFS), 225-245 (GLLI…NALL), and 253-273 (VVVL…LSGI).

Belongs to the UppP family.

The protein resides in the cell membrane. It carries out the reaction di-trans,octa-cis-undecaprenyl diphosphate + H2O = di-trans,octa-cis-undecaprenyl phosphate + phosphate + H(+). In terms of biological role, catalyzes the dephosphorylation of undecaprenyl diphosphate (UPP). The polypeptide is Undecaprenyl-diphosphatase (Saccharolobus islandicus (strain M.14.25 / Kamchatka #1) (Sulfolobus islandicus)).